A 689-amino-acid chain; its full sequence is Transcription factor BHLH42 (689 aa).

Disordered stretches follow at residues 192-287 and 458-489; these read IDHH…NPRV and DDNN…ANHV. Residues 206–217 show a composition bias toward polar residues; the sequence is EHSTSNLATSSV. Positions 246–271 are enriched in acidic residues; sequence EEQEQEQEEDEDDDDDDDDEEEAESD. Residues 483-496 are basic motif; sequence ELSANHVLAERRRR. Residues 483–532 form the bHLH domain; it reads ELSANHVLAERRRREKLNERFIILRSLVPFVTKMDKASILGDTIEYVKQL. The tract at residues 497–532 is helix-loop-helix motif; sequence EKLNERFIILRSLVPFVTKMDKASILGDTIEYVKQL. The segment at 547-570 is disordered; the sequence is EIDQRSRSSGDPQRSGAKAATDKR.

It belongs to the bHLH protein family. In terms of assembly, interacts with MYB123. Expressed in the inner pericarp of maturing fruits.

Its subcellular location is the nucleus. In terms of biological role, transcription activator involved in the spatiotemporal regulation of anthocyanin biosynthesis specifically in the inner pericarp of red-fleshed kiwifruits. Functions in association with MYB123 to activate the promoters of LDOX (ANS) and F3GT1 that encode the dedicated enzymes for anthocyanin biosynthesis. In Actinidia chinensis var. chinensis (Chinese soft-hair kiwi), this protein is Transcription factor BHLH42.